Consider the following 247-residue polypeptide: UPF0659 protein C216.03 (247 aa).

It belongs to the UPF0659 family.

It localises to the cytoplasm. The protein localises to the nucleus. This Schizosaccharomyces pombe (strain 972 / ATCC 24843) (Fission yeast) protein is UPF0659 protein C216.03.